We begin with the raw amino-acid sequence, 398 residues long: Phospholipase C (398 aa).

The N-terminal stretch at 1–28 (MKRKICKALICAALATSLWAGASTKVYA) is a signal peptide. Zn(2+) contacts are provided by Trp-29, His-39, Asp-84, His-96, His-154, Asp-158, His-164, His-176, and Glu-180. A Zn-dependent PLC domain is found at 29-278 (WDGKIDGTGT…HDVSEGNDPS (250 aa)). Positions 275–283 (NDPSVGKNV) are linker. The region spanning 284–398 (KELVAYISTS…ISGNSTYNIK (115 aa)) is the PLAT domain. The Ca(2+) site is built by Asp-297, Gly-299, Thr-300, Asp-301, Asp-321, Asn-322, Gly-324, Asn-325, Asp-326, Asp-364, and Ala-365.

The protein belongs to the bacterial zinc-metallophospholipase C family. Requires Ca(2+) as cofactor. Zn(2+) is required as a cofactor.

The protein resides in the secreted. It carries out the reaction a 1,2-diacyl-sn-glycero-3-phosphocholine + H2O = phosphocholine + a 1,2-diacyl-sn-glycerol + H(+). Bacterial hemolysins are exotoxins that attack blood cell membranes and cause cell rupture. Constitutes an essential virulence factor in gas gangrene. Binds to eukaryotic membranes where it hydrolyzes both phosphatidylcholine and sphingomyelin. The diacylglycerol produced can activate both the arachidonic acid pathway, leading to modulation of the inflammatory response cascade and thrombosis, and protein kinase C, leading to activation of eukaryotic phospholipases and further membrane damage. Acts on human and mouse erythrocytes, but not on rabbit or horse erythrocytes. In Clostridium perfringens (strain ATCC 13124 / DSM 756 / JCM 1290 / NCIMB 6125 / NCTC 8237 / Type A), this protein is Phospholipase C (plc).